Consider the following 1020-residue polypeptide: Inner tegument protein (1020 aa).

An interaction with large tegument protein region spans residues 539–1020 (WGVRIPDRDT…EIDAIFNNTK (482 aa)).

It belongs to the herpesviridae inner tegument protein family. Interacts (via C-terminus) with the large tegument protein/LTP (via N-terminus).

It is found in the virion tegument. Its subcellular location is the host cytoplasm. The protein resides in the host nucleus. The protein localises to the host Golgi apparatus. It localises to the host trans-Golgi network. Functionally, plays an essential role in cytoplasmic secondary envelopment during viral egress. Interacts with the capsid via the large tegument protein/LTP and participates in its transport to the host trans-Golgi network (TGN) where secondary envelopment occurs. Modulates tegumentation and capsid accumulation at the viral assembly complex. This is Inner tegument protein from Equine herpesvirus 1 (strain Ab4p) (EHV-1).